We begin with the raw amino-acid sequence, 93 residues long: Ribonuclease P protein component 4 (93 aa).

4 residues coordinate Zn(2+): Cys-55, Cys-58, Cys-81, and Cys-83.

The protein belongs to the eukaryotic/archaeal RNase P protein component 4 family. As to quaternary structure, consists of a catalytic RNA component and at least 4-5 protein subunits. Zn(2+) serves as cofactor.

The protein localises to the cytoplasm. The catalysed reaction is Endonucleolytic cleavage of RNA, removing 5'-extranucleotides from tRNA precursor.. In terms of biological role, part of ribonuclease P, a protein complex that generates mature tRNA molecules by cleaving their 5'-ends. The sequence is that of Ribonuclease P protein component 4 from Halobacterium salinarum (strain ATCC 29341 / DSM 671 / R1).